The sequence spans 385 residues: AA13 family lytic polysaccharide monooxygenase NCU08746 (385 aa).

Positions 1–18 (MKFSIISVALASAITVDA) are cleaved as a signal peptide. His-19 is a binding site for Cu(2+). Position 19 is a methylhistidine (His-19). A Chitin-binding type-4 domain is found at 19–248 (HGYLTIPFSR…AQVYLSCADI (230 aa)). Cys-40 and Cys-43 form a disulfide bridge. A glycan (N-linked (GlcNAc...) asparagine) is linked at Asn-54. Disulfide bonds link Cys-66–Cys-245, Cys-102–Cys-203, Cys-118–Cys-145, Cys-153–Cys-161, Cys-167–Cys-173, and Cys-181–Cys-192. Position 109 (His-109) interacts with Cu(2+). Tyr-242 is a Cu(2+) binding site. One can recognise a CBM20 domain in the interval 278-385 (CTPAATVAVT…ESVAVESSWK (108 aa)). Asn-365 carries an N-linked (GlcNAc...) asparagine glycan.

This sequence belongs to the polysaccharide monooxygenase AA13 family. Cu(2+) is required as a cofactor.

It localises to the secreted. It catalyses the reaction starch + reduced acceptor + O2 = D-glucono-1,5-lactone-terminated malto-oligosaccharides + short-chain malto-oligosaccharides + acceptor + H2O.. Functionally, starch-active lytic polysaccharide monooxygenase that oxidizes the C1 position of starch substrates, but not in cellulose or chitin. Catalysis by LPMOs requires the reduction of the active-site copper from Cu(II) to Cu(I) by a reducing agent and H(2)O(2) or O(2) as a cosubstrate. The sequence is that of AA13 family lytic polysaccharide monooxygenase NCU08746 from Neurospora crassa (strain ATCC 24698 / 74-OR23-1A / CBS 708.71 / DSM 1257 / FGSC 987).